An 862-amino-acid polypeptide reads, in one-letter code: Leucine--tRNA ligase (862 aa).

A 'HIGH' region motif is present at residues 44 to 54; the sequence is PYPSGRIHMGH. Positions 622 to 626 match the 'KMSKS' region motif; it reads KMSKS. ATP is bound at residue Lys625.

This sequence belongs to the class-I aminoacyl-tRNA synthetase family.

The protein localises to the cytoplasm. The enzyme catalyses tRNA(Leu) + L-leucine + ATP = L-leucyl-tRNA(Leu) + AMP + diphosphate. The chain is Leucine--tRNA ligase from Rhodospirillum rubrum (strain ATCC 11170 / ATH 1.1.1 / DSM 467 / LMG 4362 / NCIMB 8255 / S1).